The primary structure comprises 177 residues: Nicotinamide-nucleotide adenylyltransferase (177 aa).

The protein belongs to the archaeal NMN adenylyltransferase family.

Its subcellular location is the cytoplasm. It carries out the reaction beta-nicotinamide D-ribonucleotide + ATP + H(+) = diphosphate + NAD(+). It functions in the pathway cofactor biosynthesis; NAD(+) biosynthesis; NAD(+) from nicotinamide D-ribonucleotide: step 1/1. This is Nicotinamide-nucleotide adenylyltransferase from Halobacterium salinarum (strain ATCC 29341 / DSM 671 / R1).